The chain runs to 295 residues: Aspartate carbamoyltransferase catalytic subunit (295 aa).

Residues R54 and T55 each coordinate carbamoyl phosphate. K82 contacts L-aspartate. Carbamoyl phosphate-binding residues include R104, H132, and Q135. L-aspartate contacts are provided by R165 and R218. Carbamoyl phosphate is bound by residues G257 and P258.

It belongs to the aspartate/ornithine carbamoyltransferase superfamily. ATCase family. Heterododecamer (2C3:3R2) of six catalytic PyrB chains organized as two trimers (C3), and six regulatory PyrI chains organized as three dimers (R2).

The catalysed reaction is carbamoyl phosphate + L-aspartate = N-carbamoyl-L-aspartate + phosphate + H(+). It participates in pyrimidine metabolism; UMP biosynthesis via de novo pathway; (S)-dihydroorotate from bicarbonate: step 2/3. In terms of biological role, catalyzes the condensation of carbamoyl phosphate and aspartate to form carbamoyl aspartate and inorganic phosphate, the committed step in the de novo pyrimidine nucleotide biosynthesis pathway. This Wolbachia pipientis subsp. Culex pipiens (strain wPip) protein is Aspartate carbamoyltransferase catalytic subunit.